Here is a 347-residue protein sequence, read N- to C-terminus: uncharacterized protein (347 aa).

The N-terminal stretch at 1 to 21 is a signal peptide; that stretch reads MRYRIFLLFFFALLPTSLVWA.

This is an uncharacterized protein from Escherichia coli (strain K12).